The following is a 215-amino-acid chain: NAD(P)H-hydrate epimerase (215 aa).

The region spanning 10–212 is the YjeF N-terminal domain; it reads SRELDDKTIN…DIGIYRGNAF (203 aa). 59–63 is a binding site for (6S)-NADPHX; it reads NNGGD. Residues N60 and D122 each coordinate K(+). Residues 126–132 and D155 each bind (6S)-NADPHX; that span reads GSGLSRN. S158 contacts K(+).

It belongs to the NnrE/AIBP family. Requires K(+) as cofactor.

The catalysed reaction is (6R)-NADHX = (6S)-NADHX. The enzyme catalyses (6R)-NADPHX = (6S)-NADPHX. Catalyzes the epimerization of the S- and R-forms of NAD(P)HX, a damaged form of NAD(P)H that is a result of enzymatic or heat-dependent hydration. This is a prerequisite for the S-specific NAD(P)H-hydrate dehydratase to allow the repair of both epimers of NAD(P)HX. In Lentilactobacillus buchneri (strain NRRL B-30929) (Lactobacillus buchneri), this protein is NAD(P)H-hydrate epimerase.